A 171-amino-acid chain; its full sequence is Secretion monitor (171 aa).

An N-terminal signal peptide occupies residues 1-30 (MIGILNRWRQFGRRYFWPHLLLGMVAASLG).

The protein belongs to the SecM family.

It localises to the cytoplasm. The protein resides in the cytosol. Its subcellular location is the periplasm. Regulates secA expression by translational coupling of the secM secA operon. Translational pausing at a specific Pro residue 5 residues before the end of the protein may allow disruption of a mRNA repressor helix that normally suppresses secA translation initiation. This chain is Secretion monitor, found in Pectobacterium atrosepticum (strain SCRI 1043 / ATCC BAA-672) (Erwinia carotovora subsp. atroseptica).